The primary structure comprises 152 residues: Transcriptional regulator MraZ (152 aa).

2 consecutive SpoVT-AbrB domains span residues 5–52 (ASAI…PIQE) and 81–124 (AHEC…DEAA).

Belongs to the MraZ family. As to quaternary structure, forms oligomers.

The protein resides in the cytoplasm. It is found in the nucleoid. In Shewanella halifaxensis (strain HAW-EB4), this protein is Transcriptional regulator MraZ.